The following is a 361-amino-acid chain: S-adenosylmethionine:tRNA ribosyltransferase-isomerase (361 aa).

This sequence belongs to the QueA family. As to quaternary structure, monomer.

The protein resides in the cytoplasm. It catalyses the reaction 7-aminomethyl-7-carbaguanosine(34) in tRNA + S-adenosyl-L-methionine = epoxyqueuosine(34) in tRNA + adenine + L-methionine + 2 H(+). It functions in the pathway tRNA modification; tRNA-queuosine biosynthesis. Its function is as follows. Transfers and isomerizes the ribose moiety from AdoMet to the 7-aminomethyl group of 7-deazaguanine (preQ1-tRNA) to give epoxyqueuosine (oQ-tRNA). The sequence is that of S-adenosylmethionine:tRNA ribosyltransferase-isomerase from Rhizobium johnstonii (strain DSM 114642 / LMG 32736 / 3841) (Rhizobium leguminosarum bv. viciae).